Reading from the N-terminus, the 276-residue chain is Phosphatidylglycerol--prolipoprotein diacylglyceryl transferase (276 aa).

The next 7 helical transmembrane spans lie at 17-37 (LAIR…LWFG), 59-79 (MLFF…VLFY), 95-115 (WEGG…MWLF), 129-149 (FIAP…FING), 176-196 (SQLY…WLFA), 202-222 (MGAV…AAEF), and 237-257 (LSMG…MVVW). Residue Arg142 coordinates a 1,2-diacyl-sn-glycero-3-phospho-(1'-sn-glycerol).

It belongs to the Lgt family.

It is found in the cell inner membrane. It catalyses the reaction L-cysteinyl-[prolipoprotein] + a 1,2-diacyl-sn-glycero-3-phospho-(1'-sn-glycerol) = an S-1,2-diacyl-sn-glyceryl-L-cysteinyl-[prolipoprotein] + sn-glycerol 1-phosphate + H(+). The protein operates within protein modification; lipoprotein biosynthesis (diacylglyceryl transfer). Catalyzes the transfer of the diacylglyceryl group from phosphatidylglycerol to the sulfhydryl group of the N-terminal cysteine of a prolipoprotein, the first step in the formation of mature lipoproteins. The protein is Phosphatidylglycerol--prolipoprotein diacylglyceryl transferase of Cupriavidus pinatubonensis (strain JMP 134 / LMG 1197) (Cupriavidus necator (strain JMP 134)).